The chain runs to 96 residues: Evasin P1074 (96 aa).

An N-terminal signal peptide occupies residues 1 to 28 (MAFNMITFLQMAVFVVILFNINLHSASA). Cystine bridges form between Cys-48/Cys-67, Cys-52/Cys-69, and Cys-63/Cys-80. N-linked (GlcNAc...) asparagine glycosylation is present at Asn-74.

It localises to the secreted. Its function is as follows. Salivary chemokine-binding protein which binds to host chemokines CXCL1 and CXCL8. This Ixodes ricinus (Common tick) protein is Evasin P1074.